The primary structure comprises 573 residues: Glutamate--tRNA ligase (573 aa).

A 'HIGH' region motif is present at residues 106-116 (PNPDGAFHLGN).

It belongs to the class-I aminoacyl-tRNA synthetase family. Glutamate--tRNA ligase type 2 subfamily.

Its subcellular location is the cytoplasm. The enzyme catalyses tRNA(Glu) + L-glutamate + ATP = L-glutamyl-tRNA(Glu) + AMP + diphosphate. In terms of biological role, catalyzes the attachment of glutamate to tRNA(Glu) in a two-step reaction: glutamate is first activated by ATP to form Glu-AMP and then transferred to the acceptor end of tRNA(Glu). This Thermococcus onnurineus (strain NA1) protein is Glutamate--tRNA ligase.